The primary structure comprises 468 residues: MSSGKIAQVVGPVVDVAFATGDKLPEINNALVVYTDEEKSRRIVLEVALELGEGVVRTIAMESTDGLTRGLEVLDTGRPISVPVGKETLGRVFNVLGDTIDMEAPFADDAEREPIHKKAPTFDELSTSTEILETGIKVIDLLAPYLKGGKVGLFGGAGVGKTVLIQELIHNIAQEHGGISVFTGVGERSREGNDLYWEMKESGVIEKTAMVFGQMNEPPGARMRVALTGLTIAEYFRDVEGQDVLLFIDNIFRFTQAGSEVSALLGRMPSAVGYQPTLATEMGQLQERITSTKKGSVTSIQAIYVPADDYTDPAPATAFAHLDSTTNLERKLTQMGIYPAVDPLASSSRALSPEIVGEEHYAVATEVQRVLQRYRELQDIIAILGMDELSDEDKTLVGRARRIQFFLSQNFNVAEQFTGQPGSYVPVAETVRGFKEILEGKYDNLPEDAFRSVGPIEDVVAKAKAMGY.

155 to 162 (GGAGVGKT) provides a ligand contact to ATP.

It belongs to the ATPase alpha/beta chains family. F-type ATPases have 2 components, CF(1) - the catalytic core - and CF(0) - the membrane proton channel. CF(1) has five subunits: alpha(3), beta(3), gamma(1), delta(1), epsilon(1). CF(0) has three main subunits: a(1), b(2) and c(9-12). The alpha and beta chains form an alternating ring which encloses part of the gamma chain. CF(1) is attached to CF(0) by a central stalk formed by the gamma and epsilon chains, while a peripheral stalk is formed by the delta and b chains.

The protein resides in the cell membrane. The catalysed reaction is ATP + H2O + 4 H(+)(in) = ADP + phosphate + 5 H(+)(out). Produces ATP from ADP in the presence of a proton gradient across the membrane. The catalytic sites are hosted primarily by the beta subunits. This Streptococcus thermophilus (strain CNRZ 1066) protein is ATP synthase subunit beta.